The primary structure comprises 515 residues: C-glycoside 3-oxidase (515 aa).

Glutamate 41 is a binding site for FAD. Over residues 62–82 (ERAHAQRRSEGPHAREDDDRV) the composition is skewed to basic and acidic residues. The disordered stretch occupies residues 62–90 (ERAHAQRRSEGPHAREDDDRVGGIVKSAQ). Positions 118, 120, 124, 129, 131, and 237 each coordinate FAD. Histidine 444 serves as the catalytic Proton acceptor. Residues asparagine 478 and threonine 490 each coordinate FAD.

The protein belongs to the GMC oxidoreductase family. Monomer. The cofactor is FAD.

It carries out the reaction isoorientin + O2 = 3''-dehydroisoorientin + H2O2. The catalysed reaction is mangiferin + O2 = 3'-dehydromangiferin + H2O2. In terms of biological role, FAD-dependent C-glycoside-metabolizing enzyme that participates in the degradation of certain C-glycosides by catalyzing the oxidation of the hydroxyl group at the C3 position of the sugar moiety. Shows oxidase activity toward C-glycosides such as isoorientin and mangiferin but cannot use carminic acid, puerarin, orientin or aloesin. Shows weak activity (100 to 1000-fold lower) with O-glycosides. Probably plays a crucial role in the metabolism of C-glycosides in nature. This chain is C-glycoside 3-oxidase, found in Microbacterium trichothecenolyticum (Aureobacterium trichothecenolyticum).